We begin with the raw amino-acid sequence, 598 residues long: Elongation factor 4 (598 aa).

Residues 2–184 (KNIRNFSIIA…EIVHKIPAPE (183 aa)) enclose the tr-type G domain. Residues 14-19 (DHGKST) and 131-134 (NKID) contribute to the GTP site.

Belongs to the TRAFAC class translation factor GTPase superfamily. Classic translation factor GTPase family. LepA subfamily.

The protein resides in the cell inner membrane. It carries out the reaction GTP + H2O = GDP + phosphate + H(+). Its function is as follows. Required for accurate and efficient protein synthesis under certain stress conditions. May act as a fidelity factor of the translation reaction, by catalyzing a one-codon backward translocation of tRNAs on improperly translocated ribosomes. Back-translocation proceeds from a post-translocation (POST) complex to a pre-translocation (PRE) complex, thus giving elongation factor G a second chance to translocate the tRNAs correctly. Binds to ribosomes in a GTP-dependent manner. The polypeptide is Elongation factor 4 (Pasteurella multocida (strain Pm70)).